A 346-amino-acid chain; its full sequence is UDP-N-acetylenolpyruvoylglucosamine reductase (346 aa).

The region spanning 23 to 194 (FDVRAQFACR…TSVTFRLPKV (172 aa)) is the FAD-binding PCMH-type domain. R170 is a catalytic residue. Residue S246 is the Proton donor of the active site. Residue E342 is part of the active site.

This sequence belongs to the MurB family. Requires FAD as cofactor.

Its subcellular location is the cytoplasm. It catalyses the reaction UDP-N-acetyl-alpha-D-muramate + NADP(+) = UDP-N-acetyl-3-O-(1-carboxyvinyl)-alpha-D-glucosamine + NADPH + H(+). It participates in cell wall biogenesis; peptidoglycan biosynthesis. Functionally, cell wall formation. The protein is UDP-N-acetylenolpyruvoylglucosamine reductase of Paraburkholderia phytofirmans (strain DSM 17436 / LMG 22146 / PsJN) (Burkholderia phytofirmans).